We begin with the raw amino-acid sequence, 177 residues long: Large ribosomal subunit protein uL6 (177 aa).

This sequence belongs to the universal ribosomal protein uL6 family. As to quaternary structure, part of the 50S ribosomal subunit.

Functionally, this protein binds to the 23S rRNA, and is important in its secondary structure. It is located near the subunit interface in the base of the L7/L12 stalk, and near the tRNA binding site of the peptidyltransferase center. The chain is Large ribosomal subunit protein uL6 from Methylobacterium nodulans (strain LMG 21967 / CNCM I-2342 / ORS 2060).